The chain runs to 137 residues: Peptide methionine sulfoxide reductase MsrB (137 aa).

The MsrB domain maps to 7–129 (PGELKNGLSE…NSASLSFTDE (123 aa)). 4 residues coordinate Zn(2+): Cys46, Cys49, Cys95, and Cys98. The active-site Nucleophile is the Cys118.

It belongs to the MsrB Met sulfoxide reductase family. Zn(2+) serves as cofactor.

It carries out the reaction L-methionyl-[protein] + [thioredoxin]-disulfide + H2O = L-methionyl-(R)-S-oxide-[protein] + [thioredoxin]-dithiol. This is Peptide methionine sulfoxide reductase MsrB from Klebsiella pneumoniae (strain 342).